Here is a 975-residue protein sequence, read N- to C-terminus: Glycine dehydrogenase (decarboxylating) (975 aa).

At K702 the chain carries N6-(pyridoxal phosphate)lysine.

It belongs to the GcvP family. In terms of assembly, the glycine cleavage system is composed of four proteins: P, T, L and H. Pyridoxal 5'-phosphate serves as cofactor.

It carries out the reaction N(6)-[(R)-lipoyl]-L-lysyl-[glycine-cleavage complex H protein] + glycine + H(+) = N(6)-[(R)-S(8)-aminomethyldihydrolipoyl]-L-lysyl-[glycine-cleavage complex H protein] + CO2. In terms of biological role, the glycine cleavage system catalyzes the degradation of glycine. The P protein binds the alpha-amino group of glycine through its pyridoxal phosphate cofactor; CO(2) is released and the remaining methylamine moiety is then transferred to the lipoamide cofactor of the H protein. The chain is Glycine dehydrogenase (decarboxylating) from Xanthomonas campestris pv. campestris (strain 8004).